The sequence spans 248 residues: Triosephosphate isomerase (248 aa).

9–11 (NWK) provides a ligand contact to substrate. Histidine 95 acts as the Electrophile in catalysis. Glutamate 166 (proton acceptor) is an active-site residue. Substrate-binding positions include glycine 172, serine 210, and 231–232 (GG).

It belongs to the triosephosphate isomerase family. In terms of assembly, homodimer.

It localises to the cytoplasm. The catalysed reaction is D-glyceraldehyde 3-phosphate = dihydroxyacetone phosphate. It functions in the pathway carbohydrate biosynthesis; gluconeogenesis. It participates in carbohydrate degradation; glycolysis; D-glyceraldehyde 3-phosphate from glycerone phosphate: step 1/1. Its function is as follows. Involved in the gluconeogenesis. Catalyzes stereospecifically the conversion of dihydroxyacetone phosphate (DHAP) to D-glyceraldehyde-3-phosphate (G3P). The polypeptide is Triosephosphate isomerase (Delftia acidovorans (strain DSM 14801 / SPH-1)).